The following is a 645-amino-acid chain: Leucine-rich repeat protein soc-2 homolog (645 aa).

Over residues 1–19 (MNLCSSGATASTTSLSSTG) the composition is skewed to low complexity. Disordered regions lie at residues 1–67 (MNLC…AGGS) and 83–151 (NSPA…IQAD). Composition is skewed to gly residues over residues 26 to 49 (GVPGGGAEGGGGDGGSGNSGGGGS) and 88 to 97 (GAGGASGSTG). Residues 98-107 (SGQQPTGSNG) are compositionally biased toward low complexity. 20 LRR repeats span residues 165 to 186 (GIKRLDLSKSSITVIPSTVKEC), 188 to 209 (HLTELYLYSNKIGQLPPEIGCL), 211 to 232 (SLRNLALNENSLTSLPESLQNC), 234 to 255 (QLKVLDLRHNKLAEIPPVIYRL), 257 to 278 (SLTTLYLRFNRITAVADDLRQL), 280 to 301 (NLTMLSLRENKIRELGSAIGAL), 303 to 324 (NLTTLDVSHNHLEHLPEDIGNC), 326 to 347 (NLSALDLQHNELLDIPDSIGNL), 349 to 371 (SLVRLGMRYNRLSSVPATLKNCK), 372 to 393 (SMDEFNVEGNGITQLPDGMLAS), 396 to 417 (GLTTITLSRNQFASYPTGGPAQ), 420 to 441 (NVYSINLEHNRIDKIPYGIFSR), 444 to 465 (GLTKLNMKENMLTALPLDIGTW), 467 to 488 (NMVELNLATNALQKLPDDIMNL), 490 to 511 (NLEILILSNNMLKKIPNTIGNL), 513 to 534 (RLRILDLEENRIEVLPHEIGLL), 536 to 557 (ELQRLILQTNQITMLPRSIGHL), 559 to 580 (NLTHLSVSENNLQFLPEEIGSL), 582 to 604 (SLENLYINQNPGLEKLPFELALC), and 606 to 627 (NLKYLNIDKCPLSTIPPEIQAG).

The protein belongs to the SHOC2 family.

Acts as a Ras effector and participates in MAPK pathway activation. Probably acts as a regulatory subunit of protein phosphatase that specifically dephosphorylates Raf kinase and stimulate Raf activity at specialized signaling complexes upon Ras activation. This is Leucine-rich repeat protein soc-2 homolog (Sur-8) from Drosophila yakuba (Fruit fly).